A 448-amino-acid polypeptide reads, in one-letter code: ATP-dependent protease ATPase subunit HslU (448 aa).

Residues I18, 60–65 (GVGKTE), D261, E326, and R398 contribute to the ATP site.

This sequence belongs to the ClpX chaperone family. HslU subfamily. A double ring-shaped homohexamer of HslV is capped on each side by a ring-shaped HslU homohexamer. The assembly of the HslU/HslV complex is dependent on binding of ATP.

The protein localises to the cytoplasm. In terms of biological role, ATPase subunit of a proteasome-like degradation complex; this subunit has chaperone activity. The binding of ATP and its subsequent hydrolysis by HslU are essential for unfolding of protein substrates subsequently hydrolyzed by HslV. HslU recognizes the N-terminal part of its protein substrates and unfolds these before they are guided to HslV for hydrolysis. The sequence is that of ATP-dependent protease ATPase subunit HslU from Paraburkholderia xenovorans (strain LB400).